The chain runs to 478 residues: Zinc metalloproteinase/disintegrin (478 aa).

The first 20 residues, 1–20 (MIQVLLVTICLAAFPYQGSS), serve as a signal peptide directing secretion. A propeptide spanning residues 21-187 (IILESGNVND…PIKKASHLNL (167 aa)) is cleaved from the precursor. Residues 193 to 389 (RYVEIVIVVD…QKPQCILKKP (197 aa)) enclose the Peptidase M12B domain. Intrachain disulfides connect Cys304/Cys384, Cys344/Cys368, and Cys346/Cys351. Residue His329 coordinates Zn(2+). Glu330 is an active-site residue. Zn(2+)-binding residues include His333 and His339. Positions 390–408 (LRTDTVSTPVSGNELLEAR) are excised as a propeptide. The Disintegrin domain maps to 397-478 (TPVSGNELLE…ADCPRNVLYG (82 aa)). 6 disulfides stabilise this stretch: Cys411–Cys420, Cys413–Cys421, Cys426–Cys440, Cys434–Cys464, Cys439–Cys443, and Cys452–Cys471. Residues 474–478 (NVLYG) constitute a propeptide that is removed on maturation.

Belongs to the venom metalloproteinase (M12B) family. P-II subfamily. P-IIa sub-subfamily. It depends on Zn(2+) as a cofactor. Expressed by the venom gland.

The protein resides in the secreted. Its function is as follows. Snake venom zinc metalloproteinase that causes hemorrhage by provoking the degradation of the sub-endothelial matrix proteins (fibronectin, laminin, type IV collagen, nidogen, and gelatins). In terms of biological role, displays low cytotoxicity. In vitro, inhibits cancer cell migration (human breast cancer cell line MDA-MB-231) with a significant rate after 24 hours of incubation. This chain is Zinc metalloproteinase/disintegrin (MPII), found in Crotalus durissus collilineatus (Brazilian rattlesnake).